Here is a 294-residue protein sequence, read N- to C-terminus: Indole-3-glycerol phosphate synthase (294 aa).

Belongs to the TrpC family.

The enzyme catalyses 1-(2-carboxyphenylamino)-1-deoxy-D-ribulose 5-phosphate + H(+) = (1S,2R)-1-C-(indol-3-yl)glycerol 3-phosphate + CO2 + H2O. It functions in the pathway amino-acid biosynthesis; L-tryptophan biosynthesis; L-tryptophan from chorismate: step 4/5. The sequence is that of Indole-3-glycerol phosphate synthase from Synechococcus sp. (strain CC9902).